The sequence spans 189 residues: UPF0149 protein VSAL_I2539 (189 aa).

This sequence belongs to the UPF0149 family.

The protein is UPF0149 protein VSAL_I2539 of Aliivibrio salmonicida (strain LFI1238) (Vibrio salmonicida (strain LFI1238)).